Here is a 554-residue protein sequence, read N- to C-terminus: Glutamine--tRNA ligase (554 aa).

The 'HIGH' region signature appears at 34 to 44; it reads PEPNGYLHIGH. ATP-binding positions include 35-37 and 41-47; these read EPN and HIGHAKS. 2 residues coordinate L-glutamine: D67 and Y212. Residues T231, 261-262, and 269-271 contribute to the ATP site; these read RL and MSK. A 'KMSKS' region motif is present at residues 268–272; it reads VMSKR. Residues 317 to 324 form an interaction with tRNA region; sequence TKQDNTIE.

It belongs to the class-I aminoacyl-tRNA synthetase family. As to quaternary structure, monomer.

It is found in the cytoplasm. The enzyme catalyses tRNA(Gln) + L-glutamine + ATP = L-glutaminyl-tRNA(Gln) + AMP + diphosphate. This chain is Glutamine--tRNA ligase, found in Escherichia coli O7:K1 (strain IAI39 / ExPEC).